The chain runs to 201 residues: Recombination protein RecR (201 aa).

A C4-type zinc finger spans residues 59-74; the sequence is CEICGNMDTENICRIC. The region spanning 82 to 177 is the Toprim domain; that stretch reads SIIAIVETVA…KISRLASGIP (96 aa).

Belongs to the RecR family.

Functionally, may play a role in DNA repair. It seems to be involved in an RecBC-independent recombinational process of DNA repair. It may act with RecF and RecO. In Rickettsia peacockii (strain Rustic), this protein is Recombination protein RecR.